Here is a 649-residue protein sequence, read N- to C-terminus: Vitamin K-dependent protein S (649 aa).

Positions 1–14 are excised as a propeptide; that stretch reads SKQQASQVLVRKRR. The 46-residue stretch at 15-60 folds into the Gla domain; the sequence is ANSMLEETKQGNLERECIEELCNKEEAREVFENDPETDYFYPKYLV. Glu-20, Glu-21, Glu-28, Glu-30, Glu-33, Glu-34, Glu-39, Glu-40, Glu-43, Glu-46, and Glu-50 each carry 4-carboxyglutamate. The cysteines at positions 31 and 36 are disulfide-linked. Positions 61–89 are thrombin-sensitive; it reads CLRSFQSGLFTAARQSTDAYPDLRSCVNA. Residues 90-128 enclose the EGF-like 1 domain; the sequence is IPDQCSPLPCNEDGYMSCKDGKASFTCTCKPGWQGERCE. 13 cysteine pairs are disulfide-bonded: Cys-94/Cys-107, Cys-99/Cys-116, Cys-118/Cys-127, Cys-134/Cys-148, Cys-144/Cys-157, Cys-159/Cys-172, Cys-178/Cys-190, Cys-185/Cys-199, Cys-201/Cys-214, Cys-220/Cys-229, Cys-225/Cys-238, Cys-240/Cys-255, and Cys-422/Cys-448. Asp-109 bears the (3R)-3-hydroxyaspartate mark. Residues 130 to 173 enclose the EGF-like 2; calcium-binding domain; sequence DINECKDPSNINGGCSQICDNTPGSYHCSCKSGFVMLSNKKDCK. One can recognise an EGF-like 3; calcium-binding domain in the interval 174-215; it reads DVDECSLKPNMCGTAVCKNIPGDFECECPEGYRYNLKSKSCE. One can recognise an EGF-like 4; calcium-binding domain in the interval 216–256; that stretch reads DVDECSENMCAQLCVNYPGGYTCYCDGKKGFKLAQDQKSCE. Laminin G-like domains are found at residues 272–448 and 457–639; these read LLYL…NKHC and YYPG…AHSC. Residues Asn-472, Asn-482, and Asn-503 are each glycosylated (N-linked (GlcNAc...) asparagine). Cysteines 612 and 639 form a disulfide.

The iron and 2-oxoglutarate dependent 3-hydroxylation of aspartate and asparagine is (R) stereospecific within EGF domains. Plasma.

Its subcellular location is the secreted. In terms of biological role, anticoagulant plasma protein; it is a cofactor to activated protein C in the degradation of coagulation factors Va and VIIIa. It helps to prevent coagulation and stimulating fibrinolysis. The chain is Vitamin K-dependent protein S (PROS1) from Macaca mulatta (Rhesus macaque).